The primary structure comprises 117 residues: MSSEKEIQQQLSQMQGQGFDPEAQQRQEAQRQEANERRQGILIQILTPDARERLSRITIVKPEKSRQIEDLIIRAAQTGQLTERVDDAKLISLLEQLSEKTKKTTITMKRRTIEDDD.

A disordered region spans residues 1 to 40; it reads MSSEKEIQQQLSQMQGQGFDPEAQQRQEAQRQEANERRQG. Residues 8-22 are compositionally biased toward low complexity; sequence QQQLSQMQGQGFDPE. Basic and acidic residues predominate over residues 23-39; sequence AQQRQEAQRQEANERRQ.

The protein belongs to the PDCD5 family.

This chain is DNA-binding protein DDB_G0278111, found in Dictyostelium discoideum (Social amoeba).